The primary structure comprises 447 residues: Argininosuccinate synthase (447 aa).

Residues 20-28 (AFSGGLDTS) and Ala46 contribute to the ATP site. Tyr102 lines the L-citrulline pocket. Gly132 and Thr134 together coordinate ATP. Positions 134, 138, and 139 each coordinate L-aspartate. Asn138 is a binding site for L-citrulline. Residue Asp139 coordinates ATP. Arg142 and Ser195 together coordinate L-citrulline. Asp197 contributes to the ATP binding site. L-citrulline-binding residues include Thr204, Glu206, and Glu283.

Belongs to the argininosuccinate synthase family. Type 2 subfamily. In terms of assembly, homotetramer.

It is found in the cytoplasm. It carries out the reaction L-citrulline + L-aspartate + ATP = 2-(N(omega)-L-arginino)succinate + AMP + diphosphate + H(+). It functions in the pathway amino-acid biosynthesis; L-arginine biosynthesis; L-arginine from L-ornithine and carbamoyl phosphate: step 2/3. This chain is Argininosuccinate synthase, found in Neisseria meningitidis serogroup C / serotype 2a (strain ATCC 700532 / DSM 15464 / FAM18).